We begin with the raw amino-acid sequence, 438 residues long: GTPase Der (438 aa).

2 consecutive EngA-type G domains span residues His2–Asp164 and Ile173–Gln343. GTP contacts are provided by residues Gly8 to Ser15, Asp55 to Leu59, Asn116 to Asp119, Gly179 to Ser186, Asp226 to Ile230, and Asn288 to Asp291. A KH-like domain is found at Ser344–Gly428.

Belongs to the TRAFAC class TrmE-Era-EngA-EngB-Septin-like GTPase superfamily. EngA (Der) GTPase family. In terms of assembly, associates with the 50S ribosomal subunit.

Functionally, GTPase that plays an essential role in the late steps of ribosome biogenesis. The protein is GTPase Der of Deinococcus radiodurans (strain ATCC 13939 / DSM 20539 / JCM 16871 / CCUG 27074 / LMG 4051 / NBRC 15346 / NCIMB 9279 / VKM B-1422 / R1).